The primary structure comprises 321 residues: Glucokinase (321 aa).

ATP is bound at residue 8–13 (GDVGGT).

This sequence belongs to the bacterial glucokinase family.

It localises to the cytoplasm. It carries out the reaction D-glucose + ATP = D-glucose 6-phosphate + ADP + H(+). In terms of biological role, not highly important in E.coli as glucose is transported into the cell by the PTS system already as glucose 6-phosphate. The sequence is that of Glucokinase from Escherichia coli O139:H28 (strain E24377A / ETEC).